The sequence spans 116 residues: Large ribosomal subunit protein bL17 (116 aa).

The protein belongs to the bacterial ribosomal protein bL17 family. As to quaternary structure, part of the 50S ribosomal subunit. Contacts protein L32.

In Sulfurovum sp. (strain NBC37-1), this protein is Large ribosomal subunit protein bL17.